The sequence spans 429 residues: Glucose-1-phosphate adenylyltransferase (429 aa).

Alpha-D-glucose 1-phosphate contacts are provided by residues glycine 162, 177-178 (EK), and serine 209.

The protein belongs to the bacterial/plant glucose-1-phosphate adenylyltransferase family. Homotetramer.

The catalysed reaction is alpha-D-glucose 1-phosphate + ATP + H(+) = ADP-alpha-D-glucose + diphosphate. It functions in the pathway glycan biosynthesis; glycogen biosynthesis. Its activity is regulated as follows. Activated by 3-phosphoglycerate and inhibited by phosphate. In terms of biological role, involved in the biosynthesis of ADP-glucose, a building block required for the elongation reactions to produce glycogen. Catalyzes the reaction between ATP and alpha-D-glucose 1-phosphate (G1P) to produce pyrophosphate and ADP-Glc. The protein is Glucose-1-phosphate adenylyltransferase of Nostoc sp. (strain PCC 7120 / SAG 25.82 / UTEX 2576).